The sequence spans 230 residues: Ribosome-recycling factor, mitochondrial (230 aa).

A mitochondrion-targeting transit peptide spans 1-24 (MILTTARLNCRPVTVPRLFNRSFS).

This sequence belongs to the RRF family.

The protein resides in the mitochondrion. Its function is as follows. Necessary for protein synthesis in mitochondria. Functions as a ribosome recycling factor in mitochondria. The protein is Ribosome-recycling factor, mitochondrial (RRF1) of Saccharomyces cerevisiae (strain ATCC 204508 / S288c) (Baker's yeast).